The chain runs to 111 residues: Stress-response A/B barrel domain-containing protein At5g22580 (111 aa).

The Stress-response A/B barrel domain occupies 6 to 98 (FKHLVVVKFK…VIDKIVLLDF (93 aa)). 4 residues coordinate Mg(2+): Val-31, Ile-34, Asp-35, and Val-37.

Homodimer. It depends on Mg(2+) as a cofactor.

In terms of biological role, involved in stress response. In Arabidopsis thaliana (Mouse-ear cress), this protein is Stress-response A/B barrel domain-containing protein At5g22580.